Consider the following 63-residue polypeptide: MHSLKGDFVSNNVTISHCHLPLSPATAIAIIICFRIVTDLKLSRLTYAFYLPGPISFLPVIPI.

The chain crosses the membrane as a helical span at residues Ile15–Val37.

It is found in the membrane. This is an uncharacterized protein from Saccharomyces cerevisiae (strain ATCC 204508 / S288c) (Baker's yeast).